The sequence spans 669 residues: Glycine--tRNA ligase beta subunit (669 aa).

This sequence belongs to the class-II aminoacyl-tRNA synthetase family. In terms of assembly, tetramer of two alpha and two beta subunits.

Its subcellular location is the cytoplasm. It catalyses the reaction tRNA(Gly) + glycine + ATP = glycyl-tRNA(Gly) + AMP + diphosphate. In Phenylobacterium zucineum (strain HLK1), this protein is Glycine--tRNA ligase beta subunit.